The primary structure comprises 198 residues: Peroxiredoxin-2 (198 aa).

Residue A2 is modified to N-acetylalanine. Residues 6–164 (ARIGKPAPDF…ALRLVQAFQY (159 aa)) form the Thioredoxin domain. C51 functions as the Cysteine sulfenic acid (-SOH) intermediate in the catalytic mechanism. S112 bears the Phosphoserine mark. T182 carries the phosphothreonine modification. At K196 the chain carries N6-acetyllysine.

Belongs to the peroxiredoxin family. AhpC/Prx1 subfamily. Homodimer; disulfide-linked, upon oxidation. 5 homodimers assemble to form a ring-like decamer. Interacts with TIPIN. Post-translationally, the enzyme can be inactivated by further oxidation of the cysteine sulfenic acid (C(P)-SOH) to sulphinic acid (C(P)-SO2H) instead of its condensation to a disulfide bond. It can be reactivated by forming a transient disulfide bond with sulfiredoxin SRXN1, which reduces the cysteine sulfinic acid in an ATP- and Mg-dependent manner. In terms of processing, acetylation increases resistance to transition to high molecular-mass complexes. Deacetylated by HDAC6 which decreases reducing activity.

The protein resides in the cytoplasm. The catalysed reaction is a hydroperoxide + [thioredoxin]-dithiol = an alcohol + [thioredoxin]-disulfide + H2O. Functionally, thiol-specific peroxidase that catalyzes the reduction of hydrogen peroxide and organic hydroperoxides to water and alcohols, respectively. Plays a role in cell protection against oxidative stress by detoxifying peroxides and as sensor of hydrogen peroxide-mediated signaling events. Might participate in the signaling cascades of growth factors and tumor necrosis factor-alpha by regulating the intracellular concentrations of H(2)O(2). This Macaca fascicularis (Crab-eating macaque) protein is Peroxiredoxin-2 (PRDX2).